A 284-amino-acid polypeptide reads, in one-letter code: Diaminopimelate epimerase (284 aa).

Positions 21, 54, and 74 each coordinate substrate. The Proton donor role is filled by Cys83. Residues 84–85 (GN), Asn167, Asn200, and 218–219 (ER) each bind substrate. Residue Cys227 is the Proton acceptor of the active site. 228–229 (GS) serves as a coordination point for substrate.

It belongs to the diaminopimelate epimerase family. In terms of assembly, homodimer.

It is found in the cytoplasm. It catalyses the reaction (2S,6S)-2,6-diaminopimelate = meso-2,6-diaminopimelate. The protein operates within amino-acid biosynthesis; L-lysine biosynthesis via DAP pathway; DL-2,6-diaminopimelate from LL-2,6-diaminopimelate: step 1/1. Functionally, catalyzes the stereoinversion of LL-2,6-diaminopimelate (L,L-DAP) to meso-diaminopimelate (meso-DAP), a precursor of L-lysine and an essential component of the bacterial peptidoglycan. This chain is Diaminopimelate epimerase, found in Buchnera aphidicola subsp. Acyrthosiphon pisum (strain 5A).